We begin with the raw amino-acid sequence, 4466 residues long: Dynein beta chain, ciliary (4466 aa).

The interval 1–1813 is stem; it reads MADVVDPRLE…YANICDAQFK (1813 aa). 154–161 contacts ATP; sequence AGQVKGKT. Coiled-coil stretches lie at residues 733–805, 1036–1056, 1306–1337, and 1443–1468; these read TVLE…WTKQ, TLDQ…EADE, WLEI…AWDA, and LLKS…MTSK. AAA regions lie at residues 1814–2035, 2095–2316, 2422–2669, and 2767–3016; these read YSYE…VLVV, KVVK…VRFK, ELDP…VFQG, and TYNE…ERRY. Residues 1852–1859, 2133–2140, 2460–2467, and 2805–2812 each bind ATP; these read GPAGTGKT, GNAGTGKS, GNAGLGKS, and GVGGSGKQ. Coiled-coil stretches lie at residues 3033 to 3092, 3263 to 3325, and 3573 to 3642; these read SLLS…QVVG, EPKR…SRTI, and QERP…EEAK. The segment at 3033 to 3325 is stalk; it reads SLLSMKSKEL…QEAEATSRTI (293 aa). AAA regions lie at residues 3409-3636 and 3846-4072; these read LTDD…EISV and VRNF…VLYN.

The protein belongs to the dynein heavy chain family. As to quaternary structure, consists of at least two heavy chains (alpha and beta), three intermediate chains and several light chains.

The protein resides in the cell projection. It is found in the cilium. Its subcellular location is the flagellum. The protein localises to the cytoplasm. It localises to the cytoskeleton. The protein resides in the flagellum axoneme. Functionally, force generating protein of eukaryotic cilia and flagella. Produces force towards the minus ends of microtubules. Dynein has ATPase activity; the force-producing power stroke is thought to occur on release of ADP. In Tripneustes gratilla (Hawaian sea urchin), this protein is Dynein beta chain, ciliary.